The sequence spans 342 residues: MNDTTAKTLNCSPASRDGFPETLGDFGRTRVDLPVVLVAGPTGVGKTAFAVELARALGSEIVNADSMQVYRHMDIGTAKPTPRERSAVPHHLIDIVDPDEPFDAGDYLARARPVIATLHEAGKVPIVVGGTGLYLKVLTRGICAGAPGDPDVRRRLIEEELTLGLPALHERLRDVDPPLGARIHPNDRQRILRALEVFHHSGKPLSYWQRQHRFEDAPYRTLKIFLHRPREVLYARINDRVDAMMAQGFLDEVRNLLAMGCGPELKPMQSLGYRQMARHLRGEMSLDEAVNEIRRDTRRYAKRQLTWFRADPEYRWFDAADTHGLVARIVRETPDLHDNRLR.

A compositionally biased stretch (polar residues) spans 1–13 (MNDTTAKTLNCSP). The disordered stretch occupies residues 1-21 (MNDTTAKTLNCSPASRDGFPE). 40–47 (GPTGVGKT) is an ATP binding site. 42-47 (TGVGKT) contributes to the substrate binding site. 2 interaction with substrate tRNA regions span residues 65–68 (DSMQ) and 189–193 (QRILR).

It belongs to the IPP transferase family. As to quaternary structure, monomer. Requires Mg(2+) as cofactor.

The enzyme catalyses adenosine(37) in tRNA + dimethylallyl diphosphate = N(6)-dimethylallyladenosine(37) in tRNA + diphosphate. Catalyzes the transfer of a dimethylallyl group onto the adenine at position 37 in tRNAs that read codons beginning with uridine, leading to the formation of N6-(dimethylallyl)adenosine (i(6)A). This chain is tRNA dimethylallyltransferase, found in Syntrophobacter fumaroxidans (strain DSM 10017 / MPOB).